The chain runs to 96 residues: UPF0235 protein YggU (96 aa).

The protein belongs to the UPF0235 family.

The sequence is that of UPF0235 protein YggU from Escherichia coli (strain K12 / MC4100 / BW2952).